A 144-amino-acid chain; its full sequence is TSC22 domain family protein 1 (144 aa).

The leucine-zipper stretch occupies residues 77-98 (LKEQIKELIEKNSQLEQENNLL). The segment at 109–144 (QFQAQLQTGSPPATTQPQGSTQPPAQPASQGSGPTA) is disordered.

Belongs to the TSC-22/Dip/Bun family. In terms of assembly, forms homodimers. Forms a heterodimer with TSC22D4/THG1. Interacts with histone H1-2. Interacts with GNL3.

Its subcellular location is the cytoplasm. It is found in the nucleus. The protein localises to the mitochondrion. In terms of biological role, transcriptional repressor. Plays a role in the repression of hematopoietic precursor cell growth. Promotes IL2 deprivation-induced apoptosis in T-lymphocytes, via repression of TSC22D3/GILZ transcription and activation of the caspase cascade. Positively regulates cell death in response to TGFB3 during mammary gland involution. In Bathyergus suillus (Cape dune mole rat), this protein is TSC22 domain family protein 1.